A 237-amino-acid polypeptide reads, in one-letter code: Aspartate/glutamate leucyltransferase (237 aa).

This sequence belongs to the R-transferase family. Bpt subfamily.

The protein resides in the cytoplasm. It carries out the reaction N-terminal L-glutamyl-[protein] + L-leucyl-tRNA(Leu) = N-terminal L-leucyl-L-glutamyl-[protein] + tRNA(Leu) + H(+). It catalyses the reaction N-terminal L-aspartyl-[protein] + L-leucyl-tRNA(Leu) = N-terminal L-leucyl-L-aspartyl-[protein] + tRNA(Leu) + H(+). Functionally, functions in the N-end rule pathway of protein degradation where it conjugates Leu from its aminoacyl-tRNA to the N-termini of proteins containing an N-terminal aspartate or glutamate. The polypeptide is Aspartate/glutamate leucyltransferase (Marinobacter nauticus (strain ATCC 700491 / DSM 11845 / VT8) (Marinobacter aquaeolei)).